A 283-amino-acid polypeptide reads, in one-letter code: Acetylglutamate kinase (283 aa).

Substrate-binding positions include 64–65 (GG), Arg-86, and Asn-179.

Belongs to the acetylglutamate kinase family. ArgB subfamily.

It localises to the cytoplasm. The catalysed reaction is N-acetyl-L-glutamate + ATP = N-acetyl-L-glutamyl 5-phosphate + ADP. It participates in amino-acid biosynthesis; L-arginine biosynthesis; N(2)-acetyl-L-ornithine from L-glutamate: step 2/4. Catalyzes the ATP-dependent phosphorylation of N-acetyl-L-glutamate. This is Acetylglutamate kinase from Campylobacter hominis (strain ATCC BAA-381 / DSM 21671 / CCUG 45161 / LMG 19568 / NCTC 13146 / CH001A).